The following is a 122-amino-acid chain: Large ribosomal subunit protein uL14c (122 aa).

This sequence belongs to the universal ribosomal protein uL14 family. As to quaternary structure, part of the 50S ribosomal subunit.

The protein resides in the plastid. It is found in the chloroplast. Binds to 23S rRNA. The polypeptide is Large ribosomal subunit protein uL14c (Daucus carota (Wild carrot)).